Here is a 695-residue protein sequence, read N- to C-terminus: MSDLSKYRNIGIFAHVDAGKTTTTERILKLTGQIHKTGEVHDGESTTDFMEQEAERGITIQSAAVSCFWKDHRFNVIDTPGHVDFTVEVYRSLKVLDGGIGVFCGSGGVEPQSETNWRYANDSEVARIIFVNKLDRIGADFLNVVDQIKNVLGAVPLVMTLPIGREDDFVGVVDILSRQAYVWDDTGLPENYEITDIPADMVDDVEAYREELIETALEQDDDLLEAYMEGEMPTDEQVKMCIRRGTRDCSFFPTYCGSAFKNKGMQLILDAVVDYLPSPTEVDPQPLTDPETGEPTGEVATVSVDAPLKALAFKIMDDRFGALTFIRIYAGKLNKGDTILNSATGKTERIGRMVEMQADQRNELSSAQAGDIIAVVGMKNVKTGHTLCDVKHECTLEAMIFPTPVISIAVTPKDKGGSEKMGIAIGKMVAEDPSFLVHTDEETGETILKGMGELHLDIKVDILKRTYGVDLIVGAPQVAYRETITKPVEDSYTHKKQSGGSGQFGKIDYIMKPGEVGSGFKFTSSVVGGNVPKEFWPAIEKGFKGMMDTGVLAGFPVLDVEIELLDGGFHAVDSSAVAFEIAAKGAFRQSMPKAGAQLLEPIMAVDVFTPEDHVGDVIGDLNRRRGMIKDQMAGVTGSRIKADVPLSEMFGYIGHLRTMTSGRGQFSMEFAHYAPCPVNVAATVIEEVKALNAKK.

Positions 5 to 280 (SKYRNIGIFA…AVVDYLPSPT (276 aa)) constitute a tr-type G domain. GTP is bound by residues 14–21 (AHVDAGKT), 78–82 (DTPGH), and 132–135 (NKLD).

Belongs to the TRAFAC class translation factor GTPase superfamily. Classic translation factor GTPase family. EF-G/EF-2 subfamily.

Its subcellular location is the cytoplasm. In terms of biological role, catalyzes the GTP-dependent ribosomal translocation step during translation elongation. During this step, the ribosome changes from the pre-translocational (PRE) to the post-translocational (POST) state as the newly formed A-site-bound peptidyl-tRNA and P-site-bound deacylated tRNA move to the P and E sites, respectively. Catalyzes the coordinated movement of the two tRNA molecules, the mRNA and conformational changes in the ribosome. The chain is Elongation factor G 2 from Photobacterium profundum (strain SS9).